We begin with the raw amino-acid sequence, 281 residues long: Proteasome subunit beta (281 aa).

Residues 1–53 (MEANTRSTGRLPAAFLTPGSSSFMDFLSDHQPELLPGKRQLPPTQGVIEAPHG) constitute a propeptide, removed in mature form; by autocatalysis. Thr-54 acts as the Nucleophile in catalysis.

It belongs to the peptidase T1B family. The 20S proteasome core is composed of 14 alpha and 14 beta subunits that assemble into four stacked heptameric rings, resulting in a barrel-shaped structure. The two inner rings, each composed of seven catalytic beta subunits, are sandwiched by two outer rings, each composed of seven alpha subunits. The catalytic chamber with the active sites is on the inside of the barrel. Has a gated structure, the ends of the cylinder being occluded by the N-termini of the alpha-subunits. Is capped by the proteasome-associated ATPase, ARC.

It is found in the cytoplasm. The enzyme catalyses Cleavage of peptide bonds with very broad specificity.. Its pathway is protein degradation; proteasomal Pup-dependent pathway. With respect to regulation, the formation of the proteasomal ATPase ARC-20S proteasome complex, likely via the docking of the C-termini of ARC into the intersubunit pockets in the alpha-rings, may trigger opening of the gate for substrate entry. Interconversion between the open-gate and close-gate conformations leads to a dynamic regulation of the 20S proteasome proteolysis activity. In terms of biological role, component of the proteasome core, a large protease complex with broad specificity involved in protein degradation. The protein is Proteasome subunit beta of Streptomyces scabiei (strain 87.22).